Here is a 1308-residue protein sequence, read N- to C-terminus: Receptor tyrosine-protein kinase erbB-4 (1308 aa).

The N-terminal stretch at 1–25 (MKPATGLWVWVSLLVAAGTVQPSDS) is a signal peptide. Residues 26–651 (QSVCAGTENK…STLPQHARTP (626 aa)) lie on the Extracellular side of the membrane. A disulfide bridge connects residues cysteine 29 and cysteine 56. Asparagine 138, asparagine 174, and asparagine 181 each carry an N-linked (GlcNAc...) asparagine glycan. 12 cysteine pairs are disulfide-bonded: cysteine 156–cysteine 186, cysteine 189–cysteine 197, cysteine 193–cysteine 205, cysteine 213–cysteine 221, cysteine 217–cysteine 229, cysteine 230–cysteine 238, cysteine 234–cysteine 246, cysteine 249–cysteine 258, cysteine 262–cysteine 289, cysteine 293–cysteine 304, cysteine 308–cysteine 323, and cysteine 326–cysteine 330. A glycan (N-linked (GlcNAc...) asparagine) is linked at asparagine 253. Residues asparagine 358, asparagine 410, asparagine 473, and asparagine 495 are each glycosylated (N-linked (GlcNAc...) asparagine). 10 disulfides stabilise this stretch: cysteine 503–cysteine 512, cysteine 507–cysteine 520, cysteine 523–cysteine 532, cysteine 536–cysteine 552, cysteine 555–cysteine 569, cysteine 559–cysteine 577, cysteine 580–cysteine 589, cysteine 593–cysteine 614, cysteine 617–cysteine 625, and cysteine 621–cysteine 633. Residue asparagine 548 is glycosylated (N-linked (GlcNAc...) asparagine). Residue asparagine 576 is glycosylated (N-linked (GlcNAc...) asparagine). Residue asparagine 620 is glycosylated (N-linked (GlcNAc...) asparagine). Residues 652 to 675 (LIAAGVIGGLFILVIVGLTFAVYV) traverse the membrane as a helical segment. The short motif at 676–684 (RRKSIKKKR) is the Nuclear localization signal element. Topologically, residues 676–1308 (RRKSIKKKRA…PPYRHRNTVV (633 aa)) are cytoplasmic. The Protein kinase domain maps to 718-985 (LKRVKVLGSG…RMARDPQRYL (268 aa)). Residues 724–732 (LGSGAFGTV), lysine 751, 797–799 (QLM), and 843–848 (DLAARN) contribute to the ATP site. Aspartate 843 (proton acceptor) is an active-site residue. 10 positions are modified to phosphotyrosine; by autocatalysis: tyrosine 875, tyrosine 1035, tyrosine 1056, tyrosine 1150, tyrosine 1162, tyrosine 1188, tyrosine 1202, tyrosine 1242, tyrosine 1258, and tyrosine 1284. 2 consecutive short sequence motifs (PPxY motif) follow at residues 1032 to 1035 (PPIY) and 1053 to 1056 (PPAY). Positions 1117 to 1150 (PHVQEDSSTQRYSADPTVFAPERSPRGELDEEGY) are disordered. The PPxY motif 3 signature appears at 1298–1301 (PPPY). A PDZ-binding motif is present at residues 1306 to 1308 (TVV).

Belongs to the protein kinase superfamily. Tyr protein kinase family. EGF receptor subfamily. As to quaternary structure, monomer in the absence of bound ligand. Homodimer or heterodimer with another ERBB family member upon ligand binding, thus forming heterotetramers. Interacts with EGFR and ERBB2. Interacts with CBFA2T3. Interacts with DLG2 (via its PDZ domain), DLG3 (via its PDZ domain), DLG4 (via its PDZ domain) and SNTB2 (via its PDZ domain). Interacts with MUC1. Interacts (via its PPxy motifs) with WWOX. Interacts (via the PPxY motif 3 of isoform JM-A CYT-2) with YAP1 (via the WW domain 1 of isoform 1). Interacts (isoform JM-A CYT-1 and isoform JM-B CYT-1) with WWP1. Interacts (via its intracellular domain) with TRIM28. Interacts (via the intracellular domains of both CYT-1 and CYT-2 isoforms) with KAP1; the interaction does not phosphorylate KAP1 but represses ERBB4-mediated transcriptional activity. Interacts with PRPU, DDX23, MATR3, RBM15, ILF3, KAP1, U5S1, U2SURP, ITCH, HNRNPU, AP2A1, NULC, LEO1, WWP2, IGHG1, HXK1, GRB7 and SRRT. Interacts (phosphorylated isoform JM-A CYT-1 and isoform JM-B CYT-1) with PIK3R1. Interacts with SHC1. Interacts with GRB2. Interacts (soluble intracellular domain) with STAT5A. Interacts (soluble intracellular domain) with BCL2. Interacts (phosphorylated) with STAT1. Post-translationally, isoform JM-A CYT-1 and isoform JM-A CYT-2 are processed by ADAM17. Proteolytic processing in response to ligand or 12-O-tetradecanoylphorbol-13-acetate stimulation results in the production of 120 kDa soluble receptor forms and intermediate membrane-anchored 80 kDa fragments (m80HER4), which are further processed by a presenilin-dependent gamma-secretase to release a cytoplasmic intracellular domain (E4ICD; E4ICD1/s80Cyt1 or E4ICD2/s80Cyt2, depending on the isoform). Membrane-anchored 80 kDa fragments of the processed isoform JM-A CYT-1 are more readily degraded by the proteasome than fragments of isoform JM-A CYT-2, suggesting a prevalence of E4ICD2 over E4ICD1. Isoform JM-B CYT-1 and isoform JM-B CYT-2 lack the ADAM17 cleavage site and are not processed by ADAM17, precluding further processing by gamma-secretase. In terms of processing, autophosphorylated on tyrosine residues in response to ligand binding. Autophosphorylation occurs in trans, i.e. one subunit of the dimeric receptor phosphorylates tyrosine residues on the other subunit. Ligands trigger phosphorylation at specific tyrosine residues, thereby creating binding sites for scaffold proteins and effectors. Constitutively phosphorylated at a basal level when overexpressed in heterologous systems; ligand binding leads to increased phosphorylation. Phosphorylation at Tyr-1035 is important for interaction with STAT1. Phosphorylation at Tyr-1056 is important for interaction with PIK3R1. Phosphorylation at Tyr-1242 is important for interaction with SHC1. Phosphorylation at Tyr-1188 may also contribute to the interaction with SHC1. Isoform JM-A CYT-2 is constitutively phosphorylated on tyrosine residues in a ligand-independent manner. E4ICD2 but not E4ICD1 is phosphorylated on tyrosine residues. Ubiquitinated. During mitosis, the ERBB4 intracellular domain is ubiquitinated by the APC/C complex and targeted to proteasomal degradation. Isoform JM-A CYT-1 and isoform JM-B CYT-1 are ubiquitinated by WWP1. The ERBB4 intracellular domain (E4ICD1) is ubiquitinated, and this involves NEDD4. In terms of tissue distribution, expressed at highest levels in brain, heart, kidney, in addition to skeletal muscle, parathyroid, cerebellum, pituitary, spleen, testis and breast. Lower levels in thymus, lung, salivary gland, and pancreas. Isoform JM-A CYT-1 and isoform JM-B CYT-1 are expressed in cerebellum, but only the isoform JM-B is expressed in the heart.

It is found in the cell membrane. The protein resides in the nucleus. The protein localises to the mitochondrion. It catalyses the reaction L-tyrosyl-[protein] + ATP = O-phospho-L-tyrosyl-[protein] + ADP + H(+). Binding of a cognate ligand leads to dimerization and activation by autophosphorylation on tyrosine residues. In vitro kinase activity is increased by Mg(2+). Inhibited by PD153035, lapatinib, gefitinib (iressa, ZD1839), AG1478 and BIBX1382BS. Functionally, tyrosine-protein kinase that plays an essential role as cell surface receptor for neuregulins and EGF family members and regulates development of the heart, the central nervous system and the mammary gland, gene transcription, cell proliferation, differentiation, migration and apoptosis. Required for normal cardiac muscle differentiation during embryonic development, and for postnatal cardiomyocyte proliferation. Required for normal development of the embryonic central nervous system, especially for normal neural crest cell migration and normal axon guidance. Required for mammary gland differentiation, induction of milk proteins and lactation. Acts as cell-surface receptor for the neuregulins NRG1, NRG2, NRG3 and NRG4 and the EGF family members BTC, EREG and HBEGF. Ligand binding triggers receptor dimerization and autophosphorylation at specific tyrosine residues that then serve as binding sites for scaffold proteins and effectors. Ligand specificity and signaling is modulated by alternative splicing, proteolytic processing, and by the formation of heterodimers with other ERBB family members, thereby creating multiple combinations of intracellular phosphotyrosines that trigger ligand- and context-specific cellular responses. Mediates phosphorylation of SHC1 and activation of the MAP kinases MAPK1/ERK2 and MAPK3/ERK1. Isoform JM-A CYT-1 and isoform JM-B CYT-1 phosphorylate PIK3R1, leading to the activation of phosphatidylinositol 3-kinase and AKT1 and protect cells against apoptosis. Isoform JM-A CYT-1 and isoform JM-B CYT-1 mediate reorganization of the actin cytoskeleton and promote cell migration in response to NRG1. Isoform JM-A CYT-2 and isoform JM-B CYT-2 lack the phosphotyrosine that mediates interaction with PIK3R1, and hence do not phosphorylate PIK3R1, do not protect cells against apoptosis, and do not promote reorganization of the actin cytoskeleton and cell migration. Proteolytic processing of isoform JM-A CYT-1 and isoform JM-A CYT-2 gives rise to the corresponding soluble intracellular domains (4ICD) that translocate to the nucleus, promote nuclear import of STAT5A, activation of STAT5A, mammary epithelium differentiation, cell proliferation and activation of gene expression. The ERBB4 soluble intracellular domains (4ICD) colocalize with STAT5A at the CSN2 promoter to regulate transcription of milk proteins during lactation. The ERBB4 soluble intracellular domains can also translocate to mitochondria and promote apoptosis. The polypeptide is Receptor tyrosine-protein kinase erbB-4 (ERBB4) (Homo sapiens (Human)).